Reading from the N-terminus, the 317-residue chain is 4-hydroxy-3-methylbut-2-enyl diphosphate reductase (317 aa).

Cys12 is a [4Fe-4S] cluster binding site. (2E)-4-hydroxy-3-methylbut-2-enyl diphosphate is bound by residues His41 and His74. Dimethylallyl diphosphate-binding residues include His41 and His74. Positions 41 and 74 each coordinate isopentenyl diphosphate. Residue Cys97 coordinates [4Fe-4S] cluster. His125 serves as a coordination point for (2E)-4-hydroxy-3-methylbut-2-enyl diphosphate. His125 contributes to the dimethylallyl diphosphate binding site. His125 provides a ligand contact to isopentenyl diphosphate. The active-site Proton donor is the Glu127. Residue Thr168 participates in (2E)-4-hydroxy-3-methylbut-2-enyl diphosphate binding. Residue Cys198 participates in [4Fe-4S] cluster binding. (2E)-4-hydroxy-3-methylbut-2-enyl diphosphate contacts are provided by Ser226, Ser227, Asn228, and Ser270. Dimethylallyl diphosphate-binding residues include Ser226, Ser227, Asn228, and Ser270. The isopentenyl diphosphate site is built by Ser226, Ser227, Asn228, and Ser270.

This sequence belongs to the IspH family. Homodimer. [4Fe-4S] cluster is required as a cofactor.

The catalysed reaction is isopentenyl diphosphate + 2 oxidized [2Fe-2S]-[ferredoxin] + H2O = (2E)-4-hydroxy-3-methylbut-2-enyl diphosphate + 2 reduced [2Fe-2S]-[ferredoxin] + 2 H(+). The enzyme catalyses dimethylallyl diphosphate + 2 oxidized [2Fe-2S]-[ferredoxin] + H2O = (2E)-4-hydroxy-3-methylbut-2-enyl diphosphate + 2 reduced [2Fe-2S]-[ferredoxin] + 2 H(+). It participates in isoprenoid biosynthesis; dimethylallyl diphosphate biosynthesis; dimethylallyl diphosphate from (2E)-4-hydroxy-3-methylbutenyl diphosphate: step 1/1. Its pathway is isoprenoid biosynthesis; isopentenyl diphosphate biosynthesis via DXP pathway; isopentenyl diphosphate from 1-deoxy-D-xylulose 5-phosphate: step 6/6. Functionally, catalyzes the conversion of 1-hydroxy-2-methyl-2-(E)-butenyl 4-diphosphate (HMBPP) into a mixture of isopentenyl diphosphate (IPP) and dimethylallyl diphosphate (DMAPP). Acts in the terminal step of the DOXP/MEP pathway for isoprenoid precursor biosynthesis. This Serratia proteamaculans (strain 568) protein is 4-hydroxy-3-methylbut-2-enyl diphosphate reductase.